Reading from the N-terminus, the 576-residue chain is Protein NRT1/ PTR FAMILY 2.12 (576 aa).

11 helical membrane passes run 58-78, 89-109, 130-150, 176-196, 203-223, 329-349, 364-384, 406-426, 441-461, 475-495, and 522-542; these read FNVY…GALI, IAYA…TACL, KLQL…SGGI, FFNW…TVVV, WVIG…LFFV, VWSA…FMVF, IPAA…VPIY, MGIG…VEGV, WLAL…IGLI, IANS…SLLV, and YFYY…WYCA.

Belongs to the major facilitator superfamily. Proton-dependent oligopeptide transporter (POT/PTR) (TC 2.A.17) family. In terms of tissue distribution, expressed in flowers and siliques. Expressed in vascular bundle of the siliques and in funiculus.

The protein localises to the cell membrane. Functionally, low-affinity proton-dependent nitrate transporter. Not involved in dipeptides transport. Involved in delivering nitrate for seed development. This is Protein NRT1/ PTR FAMILY 2.12 (NPF2.12) from Arabidopsis thaliana (Mouse-ear cress).